A 330-amino-acid chain; its full sequence is Tryptophan--tRNA ligase (330 aa).

Residues 10 to 12 and 18 to 19 each bind ATP; these read QPS and GN. Residues 11–19 carry the 'HIGH' region motif; it reads PSGSVTLGN. Asp133 provides a ligand contact to L-tryptophan. Residues 145 to 147, Ile184, and 193 to 197 each bind ATP; these read GED and KMSKS. Positions 193 to 197 match the 'KMSKS' region motif; it reads KMSKS.

The protein belongs to the class-I aminoacyl-tRNA synthetase family. In terms of assembly, homodimer.

It is found in the cytoplasm. It catalyses the reaction tRNA(Trp) + L-tryptophan + ATP = L-tryptophyl-tRNA(Trp) + AMP + diphosphate + H(+). Functionally, catalyzes the attachment of tryptophan to tRNA(Trp). In Bacillus subtilis (strain 168), this protein is Tryptophan--tRNA ligase.